A 325-amino-acid polypeptide reads, in one-letter code: Lactonase drp35 (325 aa).

Ca(2+)-binding residues include Glu46, Thr108, Gly110, Asp128, Thr131, Tyr133, Asp136, Asn183, Asp234, and Ser235. The active-site Proton donor is the Asp234.

It belongs to the SMP-30/CGR1 family. Requires Ca(2+) as cofactor.

Its subcellular location is the cytoplasm. Exhibits lactonase activity. Acts in cells with perturbed membrane integrity and is possibly related to the membrane homeostasis. This Staphylococcus epidermidis (strain ATCC 35984 / DSM 28319 / BCRC 17069 / CCUG 31568 / BM 3577 / RP62A) protein is Lactonase drp35 (drp35).